We begin with the raw amino-acid sequence, 85 residues long: Elicitor peptide 7 (85 aa).

Positions 1–62 are excised as a propeptide; the sequence is MEGEGRREDG…TEVVNIPRSV (62 aa). The interval 66–85 is disordered; it reads NVAARKGKQQTSSGKGGGTN.

This sequence belongs to the brassicaceae elicitor peptide family.

Elicitor of plant defense. The protein is Elicitor peptide 7 (PEP7) of Arabidopsis thaliana (Mouse-ear cress).